A 180-amino-acid chain; its full sequence is MIIYLHGFDSTSPGNHEKVLQLQFIDEDVRLISYSTLHPRHDMQHLLKQVDKMIQHSDDDRSLICGVGLGGFWAERVGFLCDIRQVIVNPNLFPQENMSGKIDRPEEYLDIATKCVANFREKNRDRCMVMLSRQDEMLDSQRSAQTLGEYYEIVWDDIQTHKFKSISPHLQRIKAFKTLG.

Belongs to the UPF0227 family.

In Pectobacterium atrosepticum (strain SCRI 1043 / ATCC BAA-672) (Erwinia carotovora subsp. atroseptica), this protein is UPF0227 protein ECA1814.